Reading from the N-terminus, the 392-residue chain is MFKHKHPFGGAFLPEELLAPIQNLKAEWEILKTQQSFLSELDCILKNYAGRQTPLTEVKNFARAIDGPRVFLKREDLLHTGAHKLNNALGQCLLAKYLGKTRVVAETGAGQHGVATATACAYLGLDCVVYMGAKDVERQKPNVEKMRFLGAEVVSVTKGSCGLKDAVNQALQDWATTHSFTHYCLGSALGPLPYPDIVRFFQSVISAEVKEQIHAVAGRDPDILIACIGGGSNAIGFFHHFIPNPKVQLIGVEGGGLGISSGKHAARFATGRPGVFHGFYSYLLQDDDGQVLQTHSISAGLDYPSVGPDHAEMHESGRAFYTLATDEEALRAFFLLTRNEGIIPALESSHALAHLVSIAPSLPKEQIVIVNLSGRGDKDLPQIIRRNRGIYE.

K84 bears the N6-(pyridoxal phosphate)lysine mark.

This sequence belongs to the TrpB family. Tetramer of two alpha and two beta chains. Requires pyridoxal 5'-phosphate as cofactor.

The enzyme catalyses (1S,2R)-1-C-(indol-3-yl)glycerol 3-phosphate + L-serine = D-glyceraldehyde 3-phosphate + L-tryptophan + H2O. It participates in amino-acid biosynthesis; L-tryptophan biosynthesis; L-tryptophan from chorismate: step 5/5. Its function is as follows. The beta subunit is responsible for the synthesis of L-tryptophan from indole and L-serine. The protein is Tryptophan synthase beta chain (trpB) of Chlamydia trachomatis serovar D (strain ATCC VR-885 / DSM 19411 / UW-3/Cx).